The following is a 492-amino-acid chain: Bifunctional protein GlmU (492 aa).

Residues 1 to 241 (MTFRGDTAVV…SALVAGVNDR (241 aa)) form a pyrophosphorylase region. UDP-N-acetyl-alpha-D-glucosamine is bound by residues 12–15 (LAAG), Lys26, Gln83, and 88–89 (GT). Mg(2+) is bound at residue Asp114. Positions 151, 166, 181, and 239 each coordinate UDP-N-acetyl-alpha-D-glucosamine. Asn239 contributes to the Mg(2+) binding site. The tract at residues 242 to 262 (VQLAQLGAELNRRIVAAHQMA) is linker. The tract at residues 263–492 (GVTVIDPATT…TPPPDADHPP (230 aa)) is N-acetyltransferase. 2 residues coordinate UDP-N-acetyl-alpha-D-glucosamine: Arg344 and Lys362. His374 acts as the Proton acceptor in catalysis. 2 residues coordinate UDP-N-acetyl-alpha-D-glucosamine: Tyr377 and Asn388. Residues Ala391, 397 to 398 (NY), and Ala434 each bind acetyl-CoA. Residues 443 to 492 (PPGALAVSGGPQRNIEDWVQQKRPGTPSAEAARKASAEQSTPPPDADHPP) are disordered.

This sequence in the N-terminal section; belongs to the N-acetylglucosamine-1-phosphate uridyltransferase family. The protein in the C-terminal section; belongs to the transferase hexapeptide repeat family. Homotrimer. Mg(2+) is required as a cofactor.

The protein resides in the cytoplasm. The enzyme catalyses alpha-D-glucosamine 1-phosphate + acetyl-CoA = N-acetyl-alpha-D-glucosamine 1-phosphate + CoA + H(+). It carries out the reaction N-acetyl-alpha-D-glucosamine 1-phosphate + UTP + H(+) = UDP-N-acetyl-alpha-D-glucosamine + diphosphate. The protein operates within nucleotide-sugar biosynthesis; UDP-N-acetyl-alpha-D-glucosamine biosynthesis; N-acetyl-alpha-D-glucosamine 1-phosphate from alpha-D-glucosamine 6-phosphate (route II): step 2/2. It participates in nucleotide-sugar biosynthesis; UDP-N-acetyl-alpha-D-glucosamine biosynthesis; UDP-N-acetyl-alpha-D-glucosamine from N-acetyl-alpha-D-glucosamine 1-phosphate: step 1/1. It functions in the pathway bacterial outer membrane biogenesis; LPS lipid A biosynthesis. Catalyzes the last two sequential reactions in the de novo biosynthetic pathway for UDP-N-acetylglucosamine (UDP-GlcNAc). The C-terminal domain catalyzes the transfer of acetyl group from acetyl coenzyme A to glucosamine-1-phosphate (GlcN-1-P) to produce N-acetylglucosamine-1-phosphate (GlcNAc-1-P), which is converted into UDP-GlcNAc by the transfer of uridine 5-monophosphate (from uridine 5-triphosphate), a reaction catalyzed by the N-terminal domain. The polypeptide is Bifunctional protein GlmU (Mycobacterium ulcerans (strain Agy99)).